The primary structure comprises 85 residues: Toxin BmKT (85 aa).

The N-terminal stretch at 1–19 is a signal peptide; that stretch reads MNYLVFFSLALLLMTGVES. The region spanning 21-83 is the LCN-type CS-alpha/beta domain; sequence RDGYIADDKN…VPIRVPGKCN (63 aa). Disulfide bonds link Cys31–Cys82, Cys35–Cys55, Cys41–Cys65, and Cys45–Cys67.

This sequence belongs to the long (4 C-C) scorpion toxin superfamily. Sodium channel inhibitor family. Alpha subfamily. Expressed by the venom gland.

It localises to the secreted. Its function is as follows. Binds to sodium channels (Nav) and inhibits the inactivation of the activated channels, thereby blocking neuronal transmission. Tested on mice, has antitumor effect and strong inhibitory effect on pain. This is Toxin BmKT from Olivierus martensii (Manchurian scorpion).